The chain runs to 726 residues: Putative tyrosine-protein kinase AmsA (726 aa).

The next 2 membrane-spanning stretches (helical) occupy residues 32-52 (WMIV…SLFA) and 425-445 (ILIV…LVLM).

The protein belongs to the etk/wzc family.

The protein localises to the cell inner membrane. The enzyme catalyses L-tyrosyl-[protein] + ATP = O-phospho-L-tyrosyl-[protein] + ADP + H(+). Its pathway is glycan metabolism; exopolysaccharide biosynthesis. In terms of biological role, involved in the biosynthesis of amylovoran which functions as a virulence factor. The sequence is that of Putative tyrosine-protein kinase AmsA (amsA) from Erwinia amylovora (Fire blight bacteria).